A 109-amino-acid polypeptide reads, in one-letter code: Flagellar hook-basal body complex protein FliE (109 aa).

The protein belongs to the FliE family.

It is found in the bacterial flagellum basal body. The chain is Flagellar hook-basal body complex protein FliE from Pseudomonas syringae pv. tomato (strain ATCC BAA-871 / DC3000).